The sequence spans 313 residues: Porphobilinogen deaminase (313 aa).

The residue at position 242 (Cys242) is an S-(dipyrrolylmethanemethyl)cysteine.

Belongs to the HMBS family. As to quaternary structure, monomer. It depends on dipyrromethane as a cofactor.

The enzyme catalyses 4 porphobilinogen + H2O = hydroxymethylbilane + 4 NH4(+). The protein operates within porphyrin-containing compound metabolism; protoporphyrin-IX biosynthesis; coproporphyrinogen-III from 5-aminolevulinate: step 2/4. Its function is as follows. Tetrapolymerization of the monopyrrole PBG into the hydroxymethylbilane pre-uroporphyrinogen in several discrete steps. This Erwinia tasmaniensis (strain DSM 17950 / CFBP 7177 / CIP 109463 / NCPPB 4357 / Et1/99) protein is Porphobilinogen deaminase.